The sequence spans 455 residues: Transmembrane protease serine 5 (455 aa).

The Cytoplasmic portion of the chain corresponds to 1–49; it reads MSPTLDDQSPMEIRCTEEGAGPGIFRMELGDQRQSISQSQRWCCLQRGC. The helical; Signal-anchor for type II membrane protein transmembrane segment at 50–70 threads the bilayer; sequence VILGVLGLLAGAGIASWLLVL. The Extracellular portion of the chain corresponds to 71–455; it reads YLWPAASPSI…DWIHDTVQVR (385 aa). The region spanning 112–207 is the SRCR domain; that stretch reads FRINGEDLLL…SGRIVSLKCS (96 aa). Disulfide bonds link Cys135–Cys196, Cys148–Cys206, Cys209–Cys328, Cys243–Cys259, Cys342–Cys411, Cys374–Cys390, and Cys401–Cys429. N-linked (GlcNAc...) asparagine glycans are attached at residues Asn163 and Asn170. One can recognise a Peptidase S1 domain in the interval 218–453; it reads IVGGQAVASG…FLDWIHDTVQ (236 aa). Active-site charge relay system residues include His258 and Asp308. Residues Asn319 and Asn375 are each glycosylated (N-linked (GlcNAc...) asparagine). Ser405 (charge relay system) is an active-site residue.

It belongs to the peptidase S1 family.

The protein resides in the cell membrane. Functionally, may play a role in hearing. The protein is Transmembrane protease serine 5 (Tmprss5) of Mus musculus (Mouse).